Here is a 136-residue protein sequence, read N- to C-terminus: Cytidine deaminase (136 aa).

A CMP/dCMP-type deaminase domain is found at 1–128 (MDVEKLIAES…KLLPGAFSKE (128 aa)). Residue 42-44 (NIE) participates in substrate binding. Cys53 provides a ligand contact to Zn(2+). The active-site Proton donor is Glu55. Positions 86 and 89 each coordinate Zn(2+).

The protein belongs to the cytidine and deoxycytidylate deaminase family. Zn(2+) is required as a cofactor.

The catalysed reaction is cytidine + H2O + H(+) = uridine + NH4(+). It carries out the reaction 2'-deoxycytidine + H2O + H(+) = 2'-deoxyuridine + NH4(+). This enzyme scavenges exogenous and endogenous cytidine and 2'-deoxycytidine for UMP synthesis. In Sporosarcina psychrophila (Bacillus psychrophilus), this protein is Cytidine deaminase (cdd).